The following is a 453-amino-acid chain: tRNA modification GTPase MnmE (453 aa).

(6S)-5-formyl-5,6,7,8-tetrahydrofolate is bound by residues R22, E79, and K119. In terms of domain architecture, TrmE-type G spans 215 to 376 (GMKVVIAGRP…LQQHLKSLMG (162 aa)). Residue N225 coordinates K(+). Residues 225–230 (NAGKSS), 244–250 (TEIAGTT), 269–272 (DTAG), and 334–337 (NKAD) each bind GTP. Position 229 (S229) interacts with Mg(2+). K(+)-binding residues include T244, I246, and T249. T250 contributes to the Mg(2+) binding site. K453 contacts (6S)-5-formyl-5,6,7,8-tetrahydrofolate.

Belongs to the TRAFAC class TrmE-Era-EngA-EngB-Septin-like GTPase superfamily. TrmE GTPase family. Homodimer. Heterotetramer of two MnmE and two MnmG subunits. The cofactor is K(+).

Its subcellular location is the cytoplasm. Exhibits a very high intrinsic GTPase hydrolysis rate. Involved in the addition of a carboxymethylaminomethyl (cmnm) group at the wobble position (U34) of certain tRNAs, forming tRNA-cmnm(5)s(2)U34. The protein is tRNA modification GTPase MnmE of Shewanella sediminis (strain HAW-EB3).